A 164-amino-acid chain; its full sequence is HTH-type transcriptional regulator IscR (164 aa).

Positions 2-131 (RLTSKGRYAV…NNITLDELVN (130 aa)) constitute an HTH rrf2-type domain. Positions 28-51 (LADISERQGISLSYLEQLFSRLRK) form a DNA-binding region, H-T-H motif. The [2Fe-2S] cluster site is built by Cys-92, Cys-98, and Cys-104.

[2Fe-2S] cluster is required as a cofactor.

In terms of biological role, regulates the transcription of several operons and genes involved in the biogenesis of Fe-S clusters and Fe-S-containing proteins. In Pectobacterium atrosepticum (strain SCRI 1043 / ATCC BAA-672) (Erwinia carotovora subsp. atroseptica), this protein is HTH-type transcriptional regulator IscR.